The following is a 109-amino-acid chain: UPF0122 protein CLH_1195 (109 aa).

Belongs to the UPF0122 family.

Might take part in the signal recognition particle (SRP) pathway. This is inferred from the conservation of its genetic proximity to ftsY/ffh. May be a regulatory protein. This chain is UPF0122 protein CLH_1195, found in Clostridium botulinum (strain Alaska E43 / Type E3).